A 507-amino-acid polypeptide reads, in one-letter code: ATP synthase subunit alpha, chloroplastic (507 aa).

170–177 (GDRQTGKT) serves as a coordination point for ATP.

Belongs to the ATPase alpha/beta chains family. In terms of assembly, F-type ATPases have 2 components, CF(1) - the catalytic core - and CF(0) - the membrane proton channel. CF(1) has five subunits: alpha(3), beta(3), gamma(1), delta(1), epsilon(1). CF(0) has four main subunits: a, b, b' and c.

The protein localises to the plastid. Its subcellular location is the chloroplast thylakoid membrane. It carries out the reaction ATP + H2O + 4 H(+)(in) = ADP + phosphate + 5 H(+)(out). Produces ATP from ADP in the presence of a proton gradient across the membrane. The alpha chain is a regulatory subunit. This Vitis vinifera (Grape) protein is ATP synthase subunit alpha, chloroplastic.